A 265-amino-acid polypeptide reads, in one-letter code: Hydroxyethylthiazole kinase (265 aa).

Methionine 44 contacts substrate. ATP-binding residues include lysine 120 and threonine 166. Glycine 193 serves as a coordination point for substrate.

It belongs to the Thz kinase family. Requires Mg(2+) as cofactor.

The enzyme catalyses 5-(2-hydroxyethyl)-4-methylthiazole + ATP = 4-methyl-5-(2-phosphooxyethyl)-thiazole + ADP + H(+). Its pathway is cofactor biosynthesis; thiamine diphosphate biosynthesis; 4-methyl-5-(2-phosphoethyl)-thiazole from 5-(2-hydroxyethyl)-4-methylthiazole: step 1/1. Functionally, catalyzes the phosphorylation of the hydroxyl group of 4-methyl-5-beta-hydroxyethylthiazole (THZ). The polypeptide is Hydroxyethylthiazole kinase (Clostridium novyi (strain NT)).